The primary structure comprises 43 residues: Alpha-1-antiproteinase 4 (43 aa).

Belongs to the serpin family. Post-translationally, N-glycosylated with carbohydrates having biantennary side chains. Plasma.

The protein localises to the secreted. The protein is Alpha-1-antiproteinase 4 of Equus caballus (Horse).